Consider the following 308-residue polypeptide: tRNA dimethylallyltransferase (308 aa).

An ATP-binding site is contributed by 9–16 (GPTAAGKT). 11 to 16 (TAAGKT) contacts substrate. Interaction with substrate tRNA regions lie at residues 34–37 (DSMQ) and 158–162 (QRLLR).

This sequence belongs to the IPP transferase family. In terms of assembly, monomer. Requires Mg(2+) as cofactor.

The catalysed reaction is adenosine(37) in tRNA + dimethylallyl diphosphate = N(6)-dimethylallyladenosine(37) in tRNA + diphosphate. Functionally, catalyzes the transfer of a dimethylallyl group onto the adenine at position 37 in tRNAs that read codons beginning with uridine, leading to the formation of N6-(dimethylallyl)adenosine (i(6)A). In Maricaulis maris (strain MCS10) (Caulobacter maris), this protein is tRNA dimethylallyltransferase.